The sequence spans 232 residues: Ribose-5-phosphate isomerase A (232 aa).

Substrate is bound by residues 29 to 32 (TGST), 84 to 87 (DGAD), and 97 to 100 (KGGG). Glu-106 serves as the catalytic Proton acceptor. Lys-124 contributes to the substrate binding site.

The protein belongs to the ribose 5-phosphate isomerase family. Homodimer.

It carries out the reaction aldehydo-D-ribose 5-phosphate = D-ribulose 5-phosphate. Its pathway is carbohydrate degradation; pentose phosphate pathway; D-ribose 5-phosphate from D-ribulose 5-phosphate (non-oxidative stage): step 1/1. In terms of biological role, catalyzes the reversible conversion of ribose-5-phosphate to ribulose 5-phosphate. The sequence is that of Ribose-5-phosphate isomerase A from Brucella suis biovar 1 (strain 1330).